The sequence spans 77 residues: Small ribosomal subunit protein bS20 (77 aa).

Belongs to the bacterial ribosomal protein bS20 family.

Its function is as follows. Binds directly to 16S ribosomal RNA. This chain is Small ribosomal subunit protein bS20, found in Lactococcus lactis subsp. lactis (strain IL1403) (Streptococcus lactis).